A 362-amino-acid chain; its full sequence is Peptide chain release factor 1 (362 aa).

Gln-237 carries the N5-methylglutamine modification. Positions 285-295 are enriched in basic and acidic residues; it reads EEKRHAEEAST. A disordered region spans residues 285 to 311; it reads EEKRHAEEASTRRNLLGSGDRSDRIRT.

The protein belongs to the prokaryotic/mitochondrial release factor family. Methylated by PrmC. Methylation increases the termination efficiency of RF1.

It localises to the cytoplasm. Its function is as follows. Peptide chain release factor 1 directs the termination of translation in response to the peptide chain termination codons UAG and UAA. This is Peptide chain release factor 1 from Photobacterium profundum (strain SS9).